A 949-amino-acid chain; its full sequence is ATPase 6, plasma membrane-type (949 aa).

At 1-64 (MAADISWDEI…EKVENKFLKF (64 aa)) the chain is on the cytoplasmic side. A helical transmembrane segment spans residues 65–84 (LGFMWNPLSWVMEAAAIMAI). At 85–96 (VLANGGGRPPDW) the chain is on the extracellular side. The helical transmembrane segment at 97 to 117 (QDFVGITCLLIINSTISFIEE) threads the bilayer. Residues 118 to 246 (NNAGNAAAAL…GHFQKVLTAI (129 aa)) are Cytoplasmic-facing. The chain crosses the membrane as a helical span at residues 247-267 (GNFCICSIGIGMLIEIIIMYP). Residues 268-276 (IQHRKYRDG) lie on the Extracellular side of the membrane. Residues 277-294 (IDNLLVLLIGGIPIAMPT) form a helical membrane-spanning segment. Over 295–645 (VLSVTMAIGS…TSRAIFQRMK (351 aa)) the chain is Cytoplasmic. D332 (4-aspartylphosphate intermediate) is an active-site residue. Mg(2+) contacts are provided by D590 and D594. A helical transmembrane segment spans residues 646–667 (NYTIYAVSITIRIVLGFMLVAL). Residues 668–672 (IWEFD) lie on the Extracellular side of the membrane. A helical membrane pass occupies residues 673 to 695 (FSPFMVLIIAILNDGTIMTISKD). Over 696–711 (RVKPSPIPDSWKLKEI) the chain is Cytoplasmic. The helical transmembrane segment at 712–732 (FATGVVLGTYMALVTVVFFWL) threads the bilayer. The Extracellular portion of the chain corresponds to 733-753 (AHDTTFFSDKFGVRSLQGKDE). The helical transmembrane segment at 754–774 (ELIAVLYLQVSIISQALIFVT) threads the bilayer. The Cytoplasmic segment spans residues 775–786 (RSRSWSFVERPG). Residues 787–807 (LLLLIAFFVAQLIATLIATYA) form a helical membrane-spanning segment. The Extracellular portion of the chain corresponds to 808 to 815 (HWEFARIK). The chain crosses the membrane as a helical span at residues 816–836 (GCGWGWCGVIWIYSIVTYIPL). At 837-949 (DILKFITRYT…IDNLNQHYTV (113 aa)) the chain is on the cytoplasmic side. T883 bears the Phosphothreonine mark. S931 carries the phosphoserine modification. The segment at 947–949 (YTV) is interaction with 14-3-3 proteins. The residue at position 948 (T948) is a Phosphothreonine.

This sequence belongs to the cation transport ATPase (P-type) (TC 3.A.3) family. Type IIIA subfamily. In terms of assembly, binds to 14-3-3 proteins. The binding is induced by phosphorylation of Thr-948. Binding to 14-3-3 proteins activates the H(+)-ATPase. Expressed in guard cells.

The protein localises to the membrane. It catalyses the reaction ATP + H2O + H(+)(in) = ADP + phosphate + 2 H(+)(out). The plasma membrane H(+) ATPase of plants and fungi generates a proton gradient that drives the active transport of nutrients by H(+)-symport. The resulting external acidification and/or internal alkinization may mediate growth responses. This is ATPase 6, plasma membrane-type (AHA6) from Arabidopsis thaliana (Mouse-ear cress).